Consider the following 216-residue polypeptide: Nicotinamidase (216 aa).

The active site involves Asp8. Zn(2+)-binding residues include Asp51, His53, and His94. Lys122 is a catalytic residue. The active-site Nucleophile is Cys167.

The protein belongs to the isochorismatase family.

The protein resides in the cytoplasm. The protein localises to the nucleus. It is found in the peroxisome. It catalyses the reaction nicotinamide + H2O = nicotinate + NH4(+). It participates in cofactor biosynthesis; nicotinate biosynthesis; nicotinate from nicotinamide: step 1/1. Inhibited by N-ethylmaleimide, HgCl(2) and PCMB. Competitively inhibited by NAD, NMN and 3-acetylpyridine. In terms of biological role, catalyzes the deamidation of nicotinamide, an early step in the NAD(+) salvage pathway. Positively regulates SIR2-mediated silencing and longevity by preventing the accumulation of intracellular nicotinamide, an inhibitor of SIR2, during times of stress. Also acts on nicotinyl hydroxamate. This is Nicotinamidase (PNC1) from Saccharomyces cerevisiae (strain ATCC 204508 / S288c) (Baker's yeast).